The following is a 385-amino-acid chain: Glucans biosynthesis protein C (385 aa).

Transmembrane regions (helical) follow at residues 17–37, 60–80, 91–111, 137–157, 173–193, 212–232, 239–259, 274–294, 311–331, and 338–358; these read AWLMLLGIPFHISLIYSSHTW, MQVFFVISGYFSYMLFLRYPL, VGIPMLTAIPLLTLPQFIMLQ, ISHLWFLLVLVVMTTLCVWIF, KFSMVKLSVIFLCLGIGYAVI, FIVMQTLFYLPFFILGALAFI, LFTTPSRGCTLAAALAFVAYL, TESVITMVLGLWMVNVVFSFG, ASLFIYLVHHPLTLFFGAYIT, and WLGFLCGLIFVVGIAIILYEI.

This sequence belongs to the acyltransferase 3 family. OpgC subfamily.

It is found in the cell membrane. Its pathway is glycan metabolism; osmoregulated periplasmic glucan (OPG) biosynthesis. Functionally, necessary for the succinyl substitution of periplasmic glucans. Could catalyze the transfer of succinyl residues from the cytoplasmic side of the membrane to the nascent glucan backbones on the periplasmic side of the membrane. The chain is Glucans biosynthesis protein C from Shigella dysenteriae serotype 1 (strain Sd197).